The sequence spans 876 residues: Probable inactive ATP-dependent zinc metalloprotease FTSHI 2, chloroplastic (876 aa).

The disordered stretch occupies residues 1–20 (MACRFPLHSSSPSQFLSPEN). The transit peptide at 1 to 32 (MACRFPLHSSSPSQFLSPENRQRLPRNYPSIS) directs the protein to the chloroplast. The span at 8–19 (HSSSPSQFLSPE) shows a compositional bias: polar residues. A helical transmembrane segment spans residues 59-79 (LLAIPITLTIISASLAKPSFA). The tract at residues 256 to 276 (TMKAQKKQQERKKRKAVRKKK) is disordered. The span at 258–275 (KAQKKQQERKKRKAVRKK) shows a compositional bias: basic residues. Residues 304–324 (VATALGLVFFYIFYRVVVLNY) traverse the membrane as a helical segment. A disordered region spans residues 350-370 (ELEREMEGIEEEDEEVEEGTG). The span at 357-368 (GIEEEDEEVEEG) shows a compositional bias: acidic residues. ATP is bound at residue 450 to 457 (GPPGVGKT).

This sequence in the N-terminal section; belongs to the AAA ATPase family. In the C-terminal section; belongs to the peptidase M41 family. As to quaternary structure, homooligomer. Interacts with FtsHi4.

It is found in the plastid. Its subcellular location is the chloroplast membrane. Its function is as follows. Required for plastid development during embryogenesis. Might be involved in chaperone functions or play a structural role in the thylakoid FtsH complex. This Arabidopsis thaliana (Mouse-ear cress) protein is Probable inactive ATP-dependent zinc metalloprotease FTSHI 2, chloroplastic.